Consider the following 150-residue polypeptide: Putative HTH-type transcriptional regulator HI_0379 (150 aa).

The 130-residue stretch at 2–131 (KLTSKGRYAV…NEITLAELVN (130 aa)) folds into the HTH rrf2-type domain.

This chain is Putative HTH-type transcriptional regulator HI_0379, found in Haemophilus influenzae (strain ATCC 51907 / DSM 11121 / KW20 / Rd).